A 168-amino-acid chain; its full sequence is Cysteine-rich perinuclear theca protein 1 (168 aa).

Positions 144–168 (NVSDPEEVPPCLDSDPFPNGDLASS) are disordered.

Specifically expressed in spermatozoa (at protein level). Detected from the elongated spermatid stage onwards; not found in immature germ cells or somatic cells (at protein level).

It localises to the cytoplasm. Its subcellular location is the cytoskeleton. The protein localises to the perinuclear theca. This is Cysteine-rich perinuclear theca protein 1 from Mus musculus (Mouse).